The primary structure comprises 111 residues: Beta-2-microglobulin (111 aa).

A signal peptide spans 1–17; the sequence is MRALILLSLGLLRVAVP. The Ig-like C1-type domain maps to 20 to 111; sequence PQVVVYTYKP…KTSIYKLESF (92 aa).

Belongs to the beta-2-microglobulin family. In terms of assembly, heterodimer of an alpha chain and a beta chain. Beta-2-microglobulin is the beta-chain of major histocompatibility complex class I molecules.

It is found in the secreted. Functionally, component of the class I major histocompatibility complex (MHC). Involved in the presentation of peptide antigens to the immune system. This chain is Beta-2-microglobulin (b2m), found in Rostroraja eglanteria (Clearnose skate).